Reading from the N-terminus, the 373-residue chain is MSARRHIGNPEYLTRRIPQNPRYQHVKSRLDTGNSMTKYIEKLEEIKKNYRYKKDELFKRLKVTTFAQLVIQVASLSDQTLEVTAEEIQRLEDNDSATSEADAEIAAKTNGKGSPEEQSPSPVQFINSTGAGDSSRSTLQSVISGVGELDVDKGLVKKEEPNGKDKPYPDCPFLLLDVRDRDSYQQCHIVGAYSYPIATLSRTMNPYSNDILEYKNAHGKIIILYDEDERLASQAATTMCERGFENLFMLSGGLKVLAQKFPEGLVTGSLPASCQQALPFGSVRKRRGPKMPALPAENKWRFTPEDLKKIECYLEEDQGPADNPSRLNQNNSAGKDSKVAACRGGQNLPTSCPASHSSPRTLTSGHLQGKPWK.

The segment at 91 to 137 is disordered; the sequence is LEDNDSATSEADAEIAAKTNGKGSPEEQSPSPVQFINSTGAGDSSRS. A phosphoserine mark is found at serine 96 and serine 99. A Phosphothreonine modification is found at threonine 109. A phosphoserine mark is found at serine 114 and serine 121. Residues 116–137 show a composition bias toward polar residues; sequence EEQSPSPVQFINSTGAGDSSRS. The 98-residue stretch at 169–266 folds into the Rhodanese domain; sequence PDCPFLLLDV…LAQKFPEGLV (98 aa). The interval 317 to 373 is disordered; that stretch reads DQGPADNPSRLNQNNSAGKDSKVAACRGGQNLPTSCPASHSSPRTLTSGHLQGKPWK. A compositionally biased stretch (polar residues) spans 325–334; it reads SRLNQNNSAG. Arginine 343 bears the Omega-N-methylarginine mark. The span at 347 to 366 shows a compositional bias: polar residues; the sequence is NLPTSCPASHSSPRTLTSGH.

Belongs to the CEP41 family. In terms of assembly, found in a complex with TTLL6.

The protein localises to the cytoplasm. It is found in the cytoskeleton. The protein resides in the microtubule organizing center. Its subcellular location is the centrosome. It localises to the cell projection. The protein localises to the cilium. It is found in the cilium basal body. Its function is as follows. Required during ciliogenesis for tubulin glutamylation in cilium. Probably acts by participating in the transport of TTLL6, a tubulin polyglutamylase, between the basal body and the cilium. The sequence is that of Centrosomal protein of 41 kDa (Cep41) from Mus musculus (Mouse).